The sequence spans 622 residues: Peptidoglycan O-acetyltransferase OatA (622 aa).

11 consecutive transmembrane segments (helical) span residues 11–31, 39–59, 81–101, 143–163, 173–193, 212–232, 237–257, 267–287, 307–327, 334–354, and 387–407; these read YVPS…AYHL, GFIG…NILL, LIPA…FFHP, LWSL…LLVF, LLKI…ILYV, LLSG…PVVP, AVLN…TAFV, GGLL…SHPA, YGIY…LEIT, AILQ…FIET, and IAGV…VLSV. Positions 412–467 are disordered; that stretch reads EKQQTSVKTTTSTPDEKKDDKKEDKATKDKEADSNKASEQKETQKPDNKNKSAATP. Low complexity predominate over residues 413–424; the sequence is KQQTSVKTTTST. A compositionally biased stretch (basic and acidic residues) spans 425-461; sequence PDEKKDDKKEDKATKDKEADSNKASEQKETQKPDNKN. Active-site residues include Ser-480, Asp-600, and His-603.

The protein belongs to the acyltransferase 3 family.

It localises to the cell membrane. It is found in the secreted. The protein resides in the cell wall. Its function is as follows. Responsible for O-acetylation at the C6-hydroxyl group of N-acetylmuramyl residues, forming the corresponding N,6-O-diacetylmuramic acid of the peptidoglycan. O-acetylation of the peptidoglycan is the major determinant for lysozyme resistance. Critical for virulence and escape from innate immune response of the host. Involved at both early and later stages of listeriosis in the mouse model of infection. Required for successful host colonization and for intracellular survival of bacteria in macrophages of the infected host. Controls the production of inflammatory mediators in the liver of the infected host. Confers resistance to host antimicrobial molecules and to cell wall-targeting molecules such as beta-lactam antibiotics and bacteriocins. This is Peptidoglycan O-acetyltransferase OatA from Listeria monocytogenes serovar 1/2a (strain ATCC BAA-679 / EGD-e).